The primary structure comprises 518 residues: MSEAEKTDVLLVGAGIMSATLCALLRLLEPNWSMTLVERLDGAAAESSDPWNNAGTGHSALCELNYTPARPDGSIDIAKAVNVNEQFQVSRQFWTYAVENGVLPDVRSFLNPIPHVSFVTGADNVQYLRKRYEALVGNPLFGTMEFIDDAGEFARRLPLMAEGRDLREPVGLNWTQDGTDVDFGALSRQLLGFGAQQGMDTLFGHDVTNLSQNSDSTWTVKVVNRRTGRKRTFNAKFVFVGAGGGALPLLQKAGIKEAKGFGGFPVGGQWLRTGNPELTAKHQAKVYGLPPLGAPPMSVPHLDTRVINDKSWLLFGPFAGWSPKFLKQGKVTDLPFSVKPDNLVSMLGVGLTEMGLLKYLIGQLLLSEAARVENLREFAPSAKDSDWELDIAGQRVQVIRKAKGKGGVLEFGTTVLSAADGSIAGLLGASPGASTAVPAMFDVMKRCFADRYPSWEPKLKEMVPSLGVTLSDEPKLFEEVWARGTKVLKLDKPAGAIPATTDGQSTAGTEHTPTAATV.

The segment at 495–518 (GAIPATTDGQSTAGTEHTPTAATV) is disordered. Positions 501 to 518 (TDGQSTAGTEHTPTAATV) are enriched in polar residues.

It belongs to the MQO family. The cofactor is FAD.

The catalysed reaction is (S)-malate + a quinone = a quinol + oxaloacetate. It participates in carbohydrate metabolism; tricarboxylic acid cycle; oxaloacetate from (S)-malate (quinone route): step 1/1. This Mycolicibacterium gilvum (strain PYR-GCK) (Mycobacterium gilvum (strain PYR-GCK)) protein is Probable malate:quinone oxidoreductase.